We begin with the raw amino-acid sequence, 167 residues long: Large ribosomal subunit protein uL23 (167 aa).

The tract at residues 1 to 130 (MNVNEIIKGP…ELEAKNKEIA (130 aa)) is large ribosomal subunit protein uL23. Disordered stretches follow at residues 91–112 (FEDE…TDEK) and 137–167 (QAEL…NSAK). Composition is skewed to basic and acidic residues over residues 97–112 (QDQK…TDEK) and 137–157 (QAEL…KIEN). The interval 131–167 (EKLAKKQAELAKKESETNENQEKKIENQTENQENSAK) is unknown. Polar residues predominate over residues 158-167 (QTENQENSAK).

The protein belongs to the universal ribosomal protein uL23 family. In terms of assembly, part of the 50S ribosomal subunit. Contacts protein L29, and trigger factor when it is bound to the ribosome.

In terms of biological role, one of the early assembly proteins it binds 23S rRNA. One of the proteins that surrounds the polypeptide exit tunnel on the outside of the ribosome. Forms the main docking site for trigger factor binding to the ribosome. The chain is Large ribosomal subunit protein uL23 from Mesomycoplasma hyopneumoniae (strain 7448) (Mycoplasma hyopneumoniae).